Here is an 888-residue protein sequence, read N- to C-terminus: Dilute domain-containing protein YPR089W (888 aa).

One can recognise a Dilute domain in the interval 360-745 (DIVLQSYWLS…KKFLNNKIKD (386 aa)). 3 disordered regions span residues 462–504 (KEQQ…NNSS), 805–827 (KQRQ…TGDE), and 865–888 (LNIP…QNPW). 2 stretches are compositionally biased toward polar residues: residues 809-823 (NEPQ…TSDF) and 867-880 (IPSS…WSNN).

The protein resides in the golgi apparatus. The sequence is that of Dilute domain-containing protein YPR089W from Saccharomyces cerevisiae (strain ATCC 204508 / S288c) (Baker's yeast).